The primary structure comprises 326 residues: Putative HTH-type transcriptional regulatory protein MmarC7_1702 (326 aa).

The HTH cro/C1-type domain occupies 128–183; the sequence is LRETREKLKISVGELAEISRVSRKTIYKYEQNEANPSAEVAIKIEEYLDVPLIKGI. Residues 139-158 constitute a DNA-binding region (H-T-H motif); the sequence is VGELAEISRVSRKTIYKYEQ.

This chain is Putative HTH-type transcriptional regulatory protein MmarC7_1702, found in Methanococcus maripaludis (strain C7 / ATCC BAA-1331).